A 303-amino-acid chain; its full sequence is UDP-N-acetylenolpyruvoylglucosamine reductase (303 aa).

The 191-residue stretch at 27–217 folds into the FAD-binding PCMH-type domain; that stretch reads KVGGISQVFY…QTVRKLTQPI (191 aa). Residue R175 is part of the active site. The Proton donor role is filled by S224. Residue E294 is part of the active site.

It belongs to the MurB family. Requires FAD as cofactor.

It is found in the cytoplasm. It carries out the reaction UDP-N-acetyl-alpha-D-muramate + NADP(+) = UDP-N-acetyl-3-O-(1-carboxyvinyl)-alpha-D-glucosamine + NADPH + H(+). Its pathway is cell wall biogenesis; peptidoglycan biosynthesis. Functionally, cell wall formation. The chain is UDP-N-acetylenolpyruvoylglucosamine reductase from Orientia tsutsugamushi (strain Ikeda) (Rickettsia tsutsugamushi).